Consider the following 273-residue polypeptide: Small ribosomal subunit protein eS1 (273 aa).

Belongs to the eukaryotic ribosomal protein eS1 family. Component of the small ribosomal subunit. Mature ribosomes consist of a small (40S) and a large (60S) subunit. The 40S subunit contains about 33 different proteins and 1 molecule of RNA (18S). The 60S subunit contains about 49 different proteins and 3 molecules of RNA (25S, 5.8S and 5S).

It localises to the cytoplasm. This chain is Small ribosomal subunit protein eS1 (rps3a), found in Dictyostelium discoideum (Social amoeba).